The following is a 119-amino-acid chain: Aspartate 1-decarboxylase (119 aa).

The active-site Schiff-base intermediate with substrate; via pyruvic acid is serine 25. Pyruvic acid (Ser) is present on serine 25. Threonine 57 provides a ligand contact to substrate. Tyrosine 58 (proton donor) is an active-site residue. 73–75 (GAA) provides a ligand contact to substrate.

Belongs to the PanD family. In terms of assembly, heterooctamer of four alpha and four beta subunits. The cofactor is pyruvate. Post-translationally, is synthesized initially as an inactive proenzyme, which is activated by self-cleavage at a specific serine bond to produce a beta-subunit with a hydroxyl group at its C-terminus and an alpha-subunit with a pyruvoyl group at its N-terminus.

The protein localises to the cytoplasm. The catalysed reaction is L-aspartate + H(+) = beta-alanine + CO2. It functions in the pathway cofactor biosynthesis; (R)-pantothenate biosynthesis; beta-alanine from L-aspartate: step 1/1. Functionally, catalyzes the pyruvoyl-dependent decarboxylation of aspartate to produce beta-alanine. The polypeptide is Aspartate 1-decarboxylase (Desulfotalea psychrophila (strain LSv54 / DSM 12343)).